A 409-amino-acid polypeptide reads, in one-letter code: F-box protein At3g17320 (409 aa).

One can recognise an F-box domain in the interval 1–47; that stretch reads MTKISDLPRDLAEEVLSRVPVTYLRAIRFTCKKWNTLTKRRSFTKKL.

This is F-box protein At3g17320 from Arabidopsis thaliana (Mouse-ear cress).